The sequence spans 137 residues: Recombination protein uvsY (137 aa).

In terms of assembly, homohexamer. Interacts with gp32.

Plays a role in viral DNA synthesis by promoting enzymatic activities of UvsX recombinase, by promoting UvsX-ssDNA filament assembly, and by helping UvsX to displace bound gp32 from ssDNA. This is Recombination protein uvsY (uvsY) from Escherichia coli (Bacteriophage T4).